The chain runs to 124 residues: Putative B3 domain-containing protein At1g51970 (124 aa).

Positions 18 to 124 (VLKKNLTESD…SRRFLFHHIN (107 aa)) form a DNA-binding region, TF-B3.

It localises to the nucleus. This is Putative B3 domain-containing protein At1g51970 from Arabidopsis thaliana (Mouse-ear cress).